We begin with the raw amino-acid sequence, 306 residues long: Putative lipid kinase Sca_1050 (306 aa).

Positions 3 to 139 constitute a DAGKc domain; sequence QHFHRGILFY…FDVLKVNDTY (137 aa). ATP contacts are provided by residues Ser44, 74-80, and Thr101; that span reads GDGTVNE. The Mg(2+) site is built by Ser220, Asp223, and Glu225. Glu281 (proton acceptor) is an active-site residue.

The protein belongs to the diacylglycerol/lipid kinase family. It depends on Mg(2+) as a cofactor.

Its function is as follows. May catalyze the ATP-dependent phosphorylation of lipids other than diacylglycerol (DAG). This is Putative lipid kinase Sca_1050 from Staphylococcus carnosus (strain TM300).